We begin with the raw amino-acid sequence, 198 residues long: tRNA (pseudouridine(54)-N(1))-methyltransferase (198 aa).

Leu-128 contributes to the S-adenosyl-L-methionine binding site.

Belongs to the methyltransferase superfamily. TrmY family. Homodimer.

It localises to the cytoplasm. The catalysed reaction is pseudouridine(54) in tRNA + S-adenosyl-L-methionine = N(1)-methylpseudouridine(54) in tRNA + S-adenosyl-L-homocysteine + H(+). Functionally, specifically catalyzes the N1-methylation of pseudouridine at position 54 (Psi54) in tRNAs. This is tRNA (pseudouridine(54)-N(1))-methyltransferase from Natronomonas pharaonis (strain ATCC 35678 / DSM 2160 / CIP 103997 / JCM 8858 / NBRC 14720 / NCIMB 2260 / Gabara) (Halobacterium pharaonis).